An 84-amino-acid chain; its full sequence is Small ribosomal subunit protein bS16 (84 aa).

This sequence belongs to the bacterial ribosomal protein bS16 family.

The sequence is that of Small ribosomal subunit protein bS16 from Endomicrobium trichonymphae.